A 916-amino-acid polypeptide reads, in one-letter code: Protein translocase subunit SecA (916 aa).

ATP is bound by residues glutamine 88, 106–110 (GEGKT), and aspartate 519. Zn(2+) is bound by residues cysteine 902, cysteine 904, cysteine 913, and cysteine 914.

This sequence belongs to the SecA family. Monomer and homodimer. Part of the essential Sec protein translocation apparatus which comprises SecA, SecYEG and auxiliary proteins SecDF. Other proteins may also be involved. It depends on Zn(2+) as a cofactor.

It is found in the cell inner membrane. Its subcellular location is the cytoplasm. The catalysed reaction is ATP + H2O + cellular proteinSide 1 = ADP + phosphate + cellular proteinSide 2.. Part of the Sec protein translocase complex. Interacts with the SecYEG preprotein conducting channel. Has a central role in coupling the hydrolysis of ATP to the transfer of proteins into and across the cell membrane, serving as an ATP-driven molecular motor driving the stepwise translocation of polypeptide chains across the membrane. This chain is Protein translocase subunit SecA, found in Treponema pallidum (strain Nichols).